The following is a 123-amino-acid chain: Phosphoribosyl-AMP cyclohydrolase (123 aa).

Residue D73 coordinates Mg(2+). C74 lines the Zn(2+) pocket. Residues D75 and D77 each coordinate Mg(2+). Zn(2+) is bound by residues C90 and C97.

This sequence belongs to the PRA-CH family. As to quaternary structure, homodimer. Requires Mg(2+) as cofactor. Zn(2+) is required as a cofactor.

It is found in the cytoplasm. The enzyme catalyses 1-(5-phospho-beta-D-ribosyl)-5'-AMP + H2O = 1-(5-phospho-beta-D-ribosyl)-5-[(5-phospho-beta-D-ribosylamino)methylideneamino]imidazole-4-carboxamide. The protein operates within amino-acid biosynthesis; L-histidine biosynthesis; L-histidine from 5-phospho-alpha-D-ribose 1-diphosphate: step 3/9. Catalyzes the hydrolysis of the adenine ring of phosphoribosyl-AMP. This is Phosphoribosyl-AMP cyclohydrolase from Methanoregula boonei (strain DSM 21154 / JCM 14090 / 6A8).